The primary structure comprises 388 residues: Chaperone protein DnaJ (388 aa).

A J domain is found at 5-69 (DYYDVLGVDK…QKKAQYDQFG (65 aa)). The segment at 145-227 (GKKTDITYTR…CHGKGTIDKK (83 aa)) adopts a CR-type zinc-finger fold. Residues Cys-158, Cys-161, Cys-175, Cys-178, Cys-201, Cys-204, Cys-215, and Cys-218 each coordinate Zn(2+). 4 CXXCXGXG motif repeats span residues 158-165 (CPTCDGSG), 175-182 (CDKCHGTG), 201-208 (CDKCGGRG), and 215-222 (CQTCHGKG).

This sequence belongs to the DnaJ family. Homodimer. It depends on Zn(2+) as a cofactor.

The protein localises to the cytoplasm. Functionally, participates actively in the response to hyperosmotic and heat shock by preventing the aggregation of stress-denatured proteins and by disaggregating proteins, also in an autonomous, DnaK-independent fashion. Unfolded proteins bind initially to DnaJ; upon interaction with the DnaJ-bound protein, DnaK hydrolyzes its bound ATP, resulting in the formation of a stable complex. GrpE releases ADP from DnaK; ATP binding to DnaK triggers the release of the substrate protein, thus completing the reaction cycle. Several rounds of ATP-dependent interactions between DnaJ, DnaK and GrpE are required for fully efficient folding. Also involved, together with DnaK and GrpE, in the DNA replication of plasmids through activation of initiation proteins. This chain is Chaperone protein DnaJ, found in Lactobacillus gasseri (strain ATCC 33323 / DSM 20243 / BCRC 14619 / CIP 102991 / JCM 1131 / KCTC 3163 / NCIMB 11718 / NCTC 13722 / AM63).